The chain runs to 421 residues: Histidine--tRNA ligase (421 aa).

The protein belongs to the class-II aminoacyl-tRNA synthetase family. Homodimer.

It localises to the cytoplasm. It catalyses the reaction tRNA(His) + L-histidine + ATP = L-histidyl-tRNA(His) + AMP + diphosphate + H(+). The chain is Histidine--tRNA ligase from Thermus thermophilus (strain ATCC BAA-163 / DSM 7039 / HB27).